The chain runs to 130 residues: MAQVQFYGTGRRKNAIARVRLVPGEGRIIVNNRPLNEYFGQKILEMLVRQPLEVTDMAGRFDVLARVEGGGTTGQAGAIRLGIARALLQADGDLRPVLKRNGFLTRDPRMKERRKYGLKKARKAPQFSKR.

The disordered stretch occupies residues L104–R130. The span at K111–R130 shows a compositional bias: basic residues.

Belongs to the universal ribosomal protein uS9 family.

The protein is Small ribosomal subunit protein uS9 of Moorella thermoacetica (strain ATCC 39073 / JCM 9320).